A 353-amino-acid polypeptide reads, in one-letter code: Photosystem II protein D1 (353 aa).

T2 is subject to N-acetylthreonine. Phosphothreonine is present on T2. 3 helical membrane passes run Y29–S46, H118–L133, and W142–A156. A chlorophyll a-binding site is contributed by H118. Residue Y126 participates in pheophytin a binding. D170 and E189 together coordinate [CaMn4O5] cluster. A helical membrane pass occupies residues F197–L218. H198 lines the chlorophyll a pocket. A quinone contacts are provided by residues H215 and S264 to F265. Residue H215 coordinates Fe cation. H272 contacts Fe cation. Residues F274–L288 form a helical membrane-spanning segment. [CaMn4O5] cluster is bound by residues H332, E333, D342, and A344. A propeptide spanning residues A345–G353 is cleaved from the precursor.

The protein belongs to the reaction center PufL/M/PsbA/D family. PSII is composed of 1 copy each of membrane proteins PsbA, PsbB, PsbC, PsbD, PsbE, PsbF, PsbH, PsbI, PsbJ, PsbK, PsbL, PsbM, PsbT, PsbX, PsbY, PsbZ, Psb30/Ycf12, at least 3 peripheral proteins of the oxygen-evolving complex and a large number of cofactors. It forms dimeric complexes. The cofactor is The D1/D2 heterodimer binds P680, chlorophylls that are the primary electron donor of PSII, and subsequent electron acceptors. It shares a non-heme iron and each subunit binds pheophytin, quinone, additional chlorophylls, carotenoids and lipids. D1 provides most of the ligands for the Mn4-Ca-O5 cluster of the oxygen-evolving complex (OEC). There is also a Cl(-1) ion associated with D1 and D2, which is required for oxygen evolution. The PSII complex binds additional chlorophylls, carotenoids and specific lipids.. In terms of processing, tyr-161 forms a radical intermediate that is referred to as redox-active TyrZ, YZ or Y-Z. Post-translationally, C-terminally processed by CTPA; processing is essential to allow assembly of the oxygen-evolving complex and thus photosynthetic growth.

It is found in the plastid. It localises to the chloroplast thylakoid membrane. It catalyses the reaction 2 a plastoquinone + 4 hnu + 2 H2O = 2 a plastoquinol + O2. In terms of biological role, photosystem II (PSII) is a light-driven water:plastoquinone oxidoreductase that uses light energy to abstract electrons from H(2)O, generating O(2) and a proton gradient subsequently used for ATP formation. It consists of a core antenna complex that captures photons, and an electron transfer chain that converts photonic excitation into a charge separation. The D1/D2 (PsbA/PsbD) reaction center heterodimer binds P680, the primary electron donor of PSII as well as several subsequent electron acceptors. The sequence is that of Photosystem II protein D1 from Vitis vinifera (Grape).